Reading from the N-terminus, the 232-residue chain is MEQIKYLLIGIIFSSAISSSLQCAYENCADWANPGQSQKHTMCLYPTTALGNKCNEGRIIQLTEADKQYILQLHNELRAKVASGGESQGSNGPQPAGKIGPLKWDNEIAEIAQRWVNQCTFEHDKCRNTKANSVGQNLYMMGSSEKSENTHDILTASVNSWYSEVKDFDNRSVREYKFEFTTGHYSQVVWGDTTHVGCGLVQYKDSGFYTTMVACNYSPAGNLIGGTVYPTL.

An N-terminal signal peptide occupies residues 1–23; sequence MEQIKYLLIGIIFSSAISSSLQC. Cystine bridges form between Cys-28-Cys-43, Cys-54-Cys-119, and Cys-198-Cys-215. The SCP domain occupies 71–217; the sequence is LQLHNELRAK…FYTTMVACNY (147 aa).

This sequence belongs to the CRISP family. Venom allergen 5-like subfamily. In terms of tissue distribution, expressed by the venom gland.

The protein localises to the secreted. In Microctonus hyperodae (Parasitoid wasp), this protein is Venom allergen 5.